Here is a 254-residue protein sequence, read N- to C-terminus: Zinc finger FYVE domain-containing protein 21 (254 aa).

The segment at 44–104 (DKECPRCMQC…QCAGCAPVSR (61 aa)) adopts an FYVE-type zinc-finger fold. 8 residues coordinate Zn(2+): C50, C53, C66, C69, C74, C77, C96, and C99. Residues 107 to 254 (ADFYDRQLKL…AKLLYESRDQ (148 aa)) form a PH-like region.

As to quaternary structure, interacts with PTK2/FAK1.

It is found in the cell junction. The protein localises to the focal adhesion. It localises to the cytoplasmic vesicle. The protein resides in the endosome. Functionally, plays a role in cell adhesion, and thereby in cell motility which requires repeated formation and disassembly of focal adhesions. Regulates microtubule-induced PTK2/FAK1 dephosphorylation, an event important for focal adhesion disassembly, as well as integrin beta-1/ITGB1 cell surface expression. In Bos taurus (Bovine), this protein is Zinc finger FYVE domain-containing protein 21 (ZFYVE21).